The sequence spans 148 residues: Endoribonuclease YbeY (148 aa).

Zn(2+) is bound by residues His-113, His-117, and His-123.

Belongs to the endoribonuclease YbeY family. The cofactor is Zn(2+).

Its subcellular location is the cytoplasm. In terms of biological role, single strand-specific metallo-endoribonuclease involved in late-stage 70S ribosome quality control and in maturation of the 3' terminus of the 16S rRNA. The protein is Endoribonuclease YbeY of Borrelia hermsii (strain HS1 / DAH).